Reading from the N-terminus, the 202-residue chain is Urease accessory protein UreE (202 aa).

Residues Arg-138–Asp-202 form a disordered region. Residues His-147–His-193 are compositionally biased toward basic and acidic residues.

The protein belongs to the UreE family.

The protein resides in the cytoplasm. Involved in urease metallocenter assembly. Binds nickel. Probably functions as a nickel donor during metallocenter assembly. The sequence is that of Urease accessory protein UreE from Rhizobium etli (strain CIAT 652).